Reading from the N-terminus, the 122-residue chain is Large ribosomal subunit protein bL17 (122 aa).

This sequence belongs to the bacterial ribosomal protein bL17 family. Part of the 50S ribosomal subunit. Contacts protein L32.

This chain is Large ribosomal subunit protein bL17, found in Staphylococcus epidermidis (strain ATCC 35984 / DSM 28319 / BCRC 17069 / CCUG 31568 / BM 3577 / RP62A).